The chain runs to 366 residues: Cytochrome c mitochondrial import factor CYC2 (366 aa).

The transit peptide at 1–50 (MLWKNYVLSSSRITRRLHKSPRKSSFSKNFFITGCLLTVGAVSSYLTYRY) directs the protein to the mitochondrion. Positions 63 to 184 (SYFVKYKISH…RGPFIDYEFP (122 aa)) constitute an FAD-binding FR-type domain.

It depends on FAD as a cofactor.

It is found in the mitochondrion inner membrane. Redox component that participates in c-type cytochrome biogenesis in the mitochondrial intermembrane space. May play a role in the reduction of heme prior to its ligation to apocytochrome c by cytochrome c heme lyase. Has oxidoreductase activity in vitro. This chain is Cytochrome c mitochondrial import factor CYC2 (CYC2), found in Saccharomyces cerevisiae (strain ATCC 204508 / S288c) (Baker's yeast).